Consider the following 130-residue polypeptide: Endoglucanase 2 (130 aa).

Catalysis depends on residues His47, Asp98, and Glu107.

This sequence belongs to the glycosyl hydrolase 9 (cellulase E) family.

The catalysed reaction is Endohydrolysis of (1-&gt;4)-beta-D-glucosidic linkages in cellulose, lichenin and cereal beta-D-glucans.. Involved in ripening fruit process. In Persea americana (Avocado), this protein is Endoglucanase 2 (CEL2).